The primary structure comprises 557 residues: Potassium-transporting ATPase potassium-binding subunit (557 aa).

A run of 12 helical transmembrane segments spans residues 5-25 (GFLL…PLGS), 63-83 (LCAI…MLLG), 132-152 (GLTV…FALI), 170-190 (LLRI…LFFI), 253-273 (FVQM…FGEV), 283-303 (LLWA…WAEV), 329-349 (VLVS…AVIA), 356-376 (ALGG…FGGV), 379-399 (GLYG…LMIG), 416-436 (LTAL…ALAM), 484-504 (LLAF…MAIA), and 526-546 (LFVG…FIPA).

The protein belongs to the KdpA family. As to quaternary structure, the system is composed of three essential subunits: KdpA, KdpB and KdpC.

It is found in the cell inner membrane. Part of the high-affinity ATP-driven potassium transport (or Kdp) system, which catalyzes the hydrolysis of ATP coupled with the electrogenic transport of potassium into the cytoplasm. This subunit binds the periplasmic potassium ions and delivers the ions to the membrane domain of KdpB through an intramembrane tunnel. The polypeptide is Potassium-transporting ATPase potassium-binding subunit (Escherichia coli (strain K12 / MC4100 / BW2952)).